A 460-amino-acid polypeptide reads, in one-letter code: Inner membrane symporter YicJ (460 aa).

Over Met-1–Lys-11 the chain is Periplasmic. 2 helical membrane passes run Ile-12–Met-32 and Met-33–Val-53. Residues Ala-54–Arg-80 lie on the Periplasmic side of the membrane. A helical transmembrane segment spans residues Pro-81–Pro-101. The Cytoplasmic portion of the chain corresponds to Asp-102 to Tyr-116. Residues Thr-117–Ile-137 traverse the membrane as a helical segment. At Thr-138–Phe-152 the chain is on the periplasmic side. The helical transmembrane segment at Val-153–Ile-173 threads the bilayer. At Gly-174–Gly-181 the chain is on the cytoplasmic side. Residues Phe-182–Phe-202 form a helical membrane-spanning segment. Over Thr-203–Gly-248 the chain is Periplasmic. Residues Gly-249–Leu-269 traverse the membrane as a helical segment. Residues Thr-270–Asp-288 are Cytoplasmic-facing. The helical transmembrane segment at Trp-289 to Ala-309 threads the bilayer. Position 310 (Met-310) is a topological domain, periplasmic. A helical membrane pass occupies residues Phe-311–Leu-331. Residues His-332–Thr-366 are Cytoplasmic-facing. Residues Leu-367–Tyr-387 form a helical membrane-spanning segment. At Gly-388–Ser-403 the chain is on the periplasmic side. Residues Ile-404–Ala-424 traverse the membrane as a helical segment. At Lys-425–Asn-460 the chain is on the cytoplasmic side.

It belongs to the sodium:galactoside symporter (TC 2.A.2) family.

The protein localises to the cell inner membrane. In Escherichia coli (strain K12), this protein is Inner membrane symporter YicJ (yicJ).